Reading from the N-terminus, the 740-residue chain is E3 ubiquitin-protein ligase DTX3L (740 aa).

N-acetylalanine is present on alanine 2. Position 9 is a phosphoserine (serine 9). Disordered stretches follow at residues 96-119 (NTRPQISSLTQSQAETPSGDMHQH), 195-231 (SEQKQQFSPSMTERKPLSQQERDSCISPSEPETKAEQ), and 524-551 (HETPMDIDSDDSKAASPPLKGSVSSEAS). 2 stretches are compositionally biased toward polar residues: residues 98–111 (RPQISSLTQSQAET) and 195–205 (SEQKQQFSPSM). Phosphoserine is present on serine 202. The segment covering 206-218 (TERKPLSQQERDS) has biased composition (basic and acidic residues). A phosphoserine mark is found at serine 221, serine 532, and serine 539. The RING-type zinc-finger motif lies at 561-600 (CVICMDTISNKKVLPKCKHEFCAPCINKAMSYKPICPTCQ).

It belongs to the Deltex family. Homodimer and heterodimer. Can heterodimerize with DTX1, enhancing its ubiquitin ligase activity in vitro. Interacts (via N-terminus) with ADP ribosyltransferase PARP9/BAL1 (via PARP catalytic domain) forming a stable complex; the interaction is required to activate PARP9 but is dispensable for DTX3L catalytic activity. Forms a complex with STAT1 and PARP9 independently of IFNB1 or IFNG-mediated STAT1 'Tyr-701' phosphorylation. Found in a complex with PARP9, STAT1 and H2BC9. Found in a complex with E3 ligase ITCH and ESCRT-0 components HGS and STAM. Interacts (via C-terminus) with ITCH; the interaction is increased upon CXCL12 stimulation and inhibits ITCH catalytic activity; the interaction is direct. Interacts with HGS and STAM; the interaction brings together HGS and STAM and promotes their recruitment to early endosomes. In terms of assembly, (Microbial infection) Interacts with encephalomyocarditis virus (EMCV) C3 protease; the interaction results in C3 protease 'Lys-48'-linked ubiquitination. As to quaternary structure, (Microbial infection) Interacts with human rhinovirus (HRV) C3 protease; the interaction results in C3 protease 'Lys-48'-linked ubiquitination. Post-translationally, autoubiquitinated.

The protein localises to the cytoplasm. Its subcellular location is the nucleus. The protein resides in the early endosome membrane. It is found in the lysosome membrane. It catalyses the reaction S-ubiquitinyl-[E2 ubiquitin-conjugating enzyme]-L-cysteine + [acceptor protein]-L-lysine = [E2 ubiquitin-conjugating enzyme]-L-cysteine + N(6)-ubiquitinyl-[acceptor protein]-L-lysine.. It participates in protein modification; protein ubiquitination. With respect to regulation, binding to PARP9 enhances DTX3L catalytic activity. In terms of biological role, E3 ubiquitin-protein ligase which, in association with ADP-ribosyltransferase PARP9, plays a role in DNA damage repair and in interferon-mediated antiviral responses. Monoubiquitinates several histones, including histone H2A, H2B, H3 and H4. In response to DNA damage, mediates monoubiquitination of 'Lys-91' of histone H4 (H4K91ub1). The exact role of H4K91ub1 in DNA damage response is still unclear but it may function as a licensing signal for additional histone H4 post-translational modifications such as H4 'Lys-20' methylation (H4K20me). PARP1-dependent PARP9-DTX3L-mediated ubiquitination promotes the rapid and specific recruitment of 53BP1/TP53BP1, UIMC1/RAP80, and BRCA1 to DNA damage sites. By monoubiquitinating histone H2B H2BC9/H2BJ and thereby promoting chromatin remodeling, positively regulates STAT1-dependent interferon-stimulated gene transcription and thus STAT1-mediated control of viral replication. Independently of its catalytic activity, promotes the sorting of chemokine receptor CXCR4 from early endosome to lysosome following CXCL12 stimulation by reducing E3 ligase ITCH activity and thus ITCH-mediated ubiquitination of endosomal sorting complex required for transport ESCRT-0 components HGS and STAM. In addition, required for the recruitment of HGS and STAM to early endosomes. In association with PARP9, plays a role in antiviral responses by mediating 'Lys-48'-linked ubiquitination of encephalomyocarditis virus (EMCV) and human rhinovirus (HRV) C3 proteases and thus promoting their proteasomal-mediated degradation. The protein is E3 ubiquitin-protein ligase DTX3L (DTX3L) of Homo sapiens (Human).